A 485-amino-acid polypeptide reads, in one-letter code: Eukaryotic translation initiation factor 3 subunit E (485 aa).

One can recognise a PCI domain in the interval 219 to 391; the sequence is NQPDGPDGIV…GEIHITKPVT (173 aa). Residues 444–485 are disordered; sequence QGGGKSNKKGDYKKGDYKKGGDFKKGGDFKKGGDHKKRAWVK. Basic and acidic residues predominate over residues 451 to 475; it reads KKGDYKKGDYKKGGDFKKGGDFKKG. The segment covering 476-485 has biased composition (basic residues); that stretch reads GDHKKRAWVK.

Belongs to the eIF-3 subunit E family. As to quaternary structure, component of the eukaryotic translation initiation factor 3 (eIF-3) complex.

It is found in the cytoplasm. Its function is as follows. Component of the eukaryotic translation initiation factor 3 (eIF-3) complex, which is involved in protein synthesis of a specialized repertoire of mRNAs and, together with other initiation factors, stimulates binding of mRNA and methionyl-tRNAi to the 40S ribosome. The eIF-3 complex specifically targets and initiates translation of a subset of mRNAs involved in cell proliferation. In Monosiga brevicollis (Choanoflagellate), this protein is Eukaryotic translation initiation factor 3 subunit E.